We begin with the raw amino-acid sequence, 358 residues long: GTPase Obg (358 aa).

Residues 1–159 (MKFLDEAKVY…RWIWLRLKLI (159 aa)) enclose the Obg domain. Residues 160–327 (ADAGLVGLPN…VLRALVEVIG (168 aa)) form the OBG-type G domain. GTP is bound by residues 166–173 (GLPNAGKS), 191–195 (FTTLH), 212–215 (DIPG), 279–282 (NKID), and 308–310 (SGV). S173 and T193 together coordinate Mg(2+). A disordered region spans residues 335 to 358 (AKGADASAAQAMETPVARAKPWSP).

Belongs to the TRAFAC class OBG-HflX-like GTPase superfamily. OBG GTPase family. Monomer. Requires Mg(2+) as cofactor.

The protein resides in the cytoplasm. Functionally, an essential GTPase which binds GTP, GDP and possibly (p)ppGpp with moderate affinity, with high nucleotide exchange rates and a fairly low GTP hydrolysis rate. Plays a role in control of the cell cycle, stress response, ribosome biogenesis and in those bacteria that undergo differentiation, in morphogenesis control. In Nitrobacter winogradskyi (strain ATCC 25391 / DSM 10237 / CIP 104748 / NCIMB 11846 / Nb-255), this protein is GTPase Obg.